Consider the following 75-residue polypeptide: RYVFEECPGVMGNRAVHGKVTRVCEDCYNVFRDTDVLAGCRKGCFSSEMFKLCLLAMERVEEFPDFKRWIGILNA.

Cystine bridges form between C7-C44, C24-C40, and C27-C53. A75 bears the Alanine amide mark.

Belongs to the arthropod CHH/MIH/GIH/VIH hormone family.

The protein resides in the secreted. Inhibits Y-organs where molting hormone (ecdysteroid) is secreted. A molting cycle is initiated when MIH secretion diminishes or stops. This chain is Molt-inhibiting hormone, found in Procambarus clarkii (Red swamp crayfish).